A 112-amino-acid polypeptide reads, in one-letter code: UPF0060 membrane protein SCO3297 (112 aa).

4 helical membrane passes run 8 to 28 (ALFV…WQGV), 33 to 53 (GWLW…VATF), 62 to 82 (ILAA…VVAD), and 88 to 108 (RWDI…MWAP).

This sequence belongs to the UPF0060 family.

Its subcellular location is the cell membrane. This Streptomyces coelicolor (strain ATCC BAA-471 / A3(2) / M145) protein is UPF0060 membrane protein SCO3297.